A 506-amino-acid chain; its full sequence is MEFVVSLFAFVVSCFILLKVAKNSKNPKRNTNLELPPGPKQLPIIGNLHQLGGGLAHHVLRNLGKQYGPLMHLKIGELSTIVVSSTEIAKEVFKTHDIHFSNRPSHILVFKIVSYDYKDIVLSQYGKYWRELRKVCNLELLSPNRVQSFRSIREDAVLNMMKSISSNDGKVVNLSEMILSLIYGITARAAFGVWSKKHEEFIRLESEIQRLATTFVLADMFPSIKFLGALSGLRYKVEKVHKKVDDILEGILKEHRRQNNNMTEENGKKDLVDVLLNIQKNGDMETPFTDQHIKAIIFDMFSAGTLTSTIAVDWAMAEMMKNPSVLKRAQDEVRNVYNGIGNVDESKLDELKYLQAVIKETLRIHPGTPIVHRETREECEINGYRIPAKARVMVNAWAISRDPNYWPEPDIFKPERFLGSEVDFKGTHFEYIPFGAGRRICPGISYAIANVQLPLAQLLYHFEWKLPGGMKPEELDMTEILGTAAQRKENLLLIPNSHSCSSLKQV.

The chain crosses the membrane as a helical span at residues 1-21 (MEFVVSLFAFVVSCFILLKVA). N-linked (GlcNAc...) asparagine glycans are attached at residues asparagine 173 and asparagine 261. Cysteine 441 is a heme binding site.

The protein belongs to the cytochrome P450 family. Heme is required as a cofactor. In terms of tissue distribution, mainly expressed in roots.

It is found in the endoplasmic reticulum membrane. The enzyme catalyses (-)-tabersonine + reduced [NADPH--hemoprotein reductase] + O2 = lochnericine + oxidized [NADPH--hemoprotein reductase] + H2O + H(+). Its pathway is alkaloid biosynthesis. Its function is as follows. Component of the monoterpenoid indole alkaloids (MIAs, e.g. echitovenine, tabersonine, lochnericine, 19-hydroxytabersonine and horhammericine) biosynthetic pathway; MIAs are used in cancer treatment and other medical applications. Cytochrome P450 catalyzing the conversion of tabersonine to lochnericine. The protein is Tabersonine 6,7-epoxidase isoform 1 of Catharanthus roseus (Madagascar periwinkle).